The following is an 82-amino-acid chain: Small ribosomal subunit protein bS16 (82 aa).

The protein belongs to the bacterial ribosomal protein bS16 family.

The chain is Small ribosomal subunit protein bS16 from Tolumonas auensis (strain DSM 9187 / NBRC 110442 / TA 4).